The following is a 98-amino-acid chain: Integration host factor subunit alpha (98 aa).

The segment at 49–71 (FGNFDLRDKNQRPGRNPKTGEDI) is disordered.

This sequence belongs to the bacterial histone-like protein family. In terms of assembly, heterodimer of an alpha and a beta chain.

Its function is as follows. This protein is one of the two subunits of integration host factor, a specific DNA-binding protein that functions in genetic recombination as well as in transcriptional and translational control. This is Integration host factor subunit alpha from Shewanella oneidensis (strain ATCC 700550 / JCM 31522 / CIP 106686 / LMG 19005 / NCIMB 14063 / MR-1).